We begin with the raw amino-acid sequence, 1461 residues long: Neogenin (1461 aa).

Residues 1–33 (MAAERGARRLLSTPSFWLYCLLLLGRRAPGAAA) form the signal peptide. Topologically, residues 34 to 1105 (ARSGSAPQSP…PTSPLDSNML (1072 aa)) are extracellular. Ig-like C2-type domains follow at residues 52-141 (PFYF…TIIS), 152-238 (PRFT…VELK), 243-336 (PEVI…AELT), and 341-426 (PEFL…AQLI). A glycan (N-linked (GlcNAc...) asparagine) is linked at N73. 3 cysteine pairs are disulfide-bonded: C74–C129, C173–C221, and C270–C320. N210 is a glycosylation site (N-linked (GlcNAc...) asparagine). An N-linked (GlcNAc...) asparagine glycan is attached at N326. C362 and C410 are disulfide-bonded. 6 consecutive Fibronectin type-III domains span residues 441 to 535 (APRD…TQPE), 541 to 631 (PAPN…TLSD), 636 to 731 (APQN…TFES), 741 to 831 (VPSS…RPHT), 856 to 952 (PPVG…TFEL), and 957 to 1054 (PPKD…TPKA). N-linked (GlcNAc...) asparagine glycosylation is found at N470 and N489. N639 and N715 each carry an N-linked (GlcNAc...) asparagine glycan. N909 carries N-linked (GlcNAc...) asparagine glycosylation. Residues 1041-1097 (GPMSEAVQFRTPKADSSDKMPNDQASGSGGKGSRLPDLGSDYKPPMSGSNSPHGSPT) form a disordered region. The segment covering 1052-1061 (PKADSSDKMP) has biased composition (basic and acidic residues). Polar residues predominate over residues 1087–1097 (SGSNSPHGSPT). Residues 1106–1126 (LVIIVSVGVITIVVVVIIAVF) traverse the membrane as a helical segment. Over 1127–1461 (CTRRTTSHQK…MKDLNAITTA (335 aa)) the chain is Cytoplasmic. 4 disordered regions span residues 1138–1160 (KRAA…DVKP), 1174–1206 (PIDK…SMDS), 1235–1276 (PKMM…PARS), and 1289–1381 (TSMS…ALPS). 2 positions are modified to phosphoserine: S1178 and S1194. The segment covering 1191–1206 (PRNSQDITPVDNSMDS) has biased composition (polar residues). The residue at position 1198 (T1198) is a Phosphothreonine. Polar residues-rich tracts occupy residues 1289 to 1322 (TSMS…TCCT) and 1330 to 1349 (ATSS…QSLP). Pro residues predominate over residues 1366 to 1375 (AIPPPGPPTY). S1401 carries the post-translational modification Phosphoserine. T1404 carries the phosphothreonine modification. S1432, S1434, and S1435 each carry phosphoserine.

The protein belongs to the immunoglobulin superfamily. DCC family. In terms of assembly, interacts with MYO10. Interacts with RGMA and RGMB. Interacts with BMP2, BMP4, BMP6, and BMP7. As to expression, widely expressed and also in cancer cell lines.

It localises to the cell membrane. In terms of biological role, multi-functional cell surface receptor regulating cell adhesion in many diverse developmental processes, including neural tube and mammary gland formation, myogenesis and angiogenesis. Receptor for members of the BMP, netrin, and repulsive guidance molecule (RGM) families. Netrin-Neogenin interactions result in a chemoattractive axon guidance response and cell-cell adhesion, the interaction between NEO1/Neogenin and RGMa and RGMb induces a chemorepulsive response. The chain is Neogenin (NEO1) from Homo sapiens (Human).